The sequence spans 494 residues: Ketol-acid reductoisomerase (NADP(+)) (494 aa).

A KARI N-terminal Rossmann domain is found at 14-208; sequence LDQLGRCRFM…GGHRAGCLES (195 aa). NADP(+) is bound by residues 45 to 48, arginine 68, arginine 76, serine 78, and 108 to 110; these read CGAQ and DKQ. Residue histidine 132 is part of the active site. Glycine 158 serves as a coordination point for NADP(+). 2 consecutive KARI C-terminal knotted domains span residues 209–344 and 345–487; these read SFVA…NYPS and TDVE…MTDM. Mg(2+) contacts are provided by aspartate 217, glutamate 221, glutamate 389, and glutamate 393. Serine 414 serves as a coordination point for substrate.

The protein belongs to the ketol-acid reductoisomerase family. Mg(2+) serves as cofactor.

The catalysed reaction is (2R)-2,3-dihydroxy-3-methylbutanoate + NADP(+) = (2S)-2-acetolactate + NADPH + H(+). The enzyme catalyses (2R,3R)-2,3-dihydroxy-3-methylpentanoate + NADP(+) = (S)-2-ethyl-2-hydroxy-3-oxobutanoate + NADPH + H(+). It functions in the pathway amino-acid biosynthesis; L-isoleucine biosynthesis; L-isoleucine from 2-oxobutanoate: step 2/4. The protein operates within amino-acid biosynthesis; L-valine biosynthesis; L-valine from pyruvate: step 2/4. Involved in the biosynthesis of branched-chain amino acids (BCAA). Catalyzes an alkyl-migration followed by a ketol-acid reduction of (S)-2-acetolactate (S2AL) to yield (R)-2,3-dihydroxy-isovalerate. In the isomerase reaction, S2AL is rearranged via a Mg-dependent methyl migration to produce 3-hydroxy-3-methyl-2-ketobutyrate (HMKB). In the reductase reaction, this 2-ketoacid undergoes a metal-dependent reduction by NADPH to yield (R)-2,3-dihydroxy-isovalerate. The polypeptide is Ketol-acid reductoisomerase (NADP(+)) (Vibrio vulnificus (strain CMCP6)).